The following is a 593-amino-acid chain: Glutamate decarboxylase 1 (593 aa).

Residues 1-12 (MASSTPSPATSS) show a composition bias toward low complexity. The tract at residues 1 to 22 (MASSTPSPATSSNAGADPNTTN) is disordered. Ser77 bears the Phosphoserine mark. 189–191 (QLS) serves as a coordination point for 4-aminobutanoate. N6-(pyridoxal phosphate)lysine is present on Lys404. Arg566 contributes to the 4-aminobutanoate binding site.

The protein belongs to the group II decarboxylase family. In terms of assembly, homodimer. Pyridoxal 5'-phosphate is required as a cofactor. Expressed in brain and pancreatic islets.

It catalyses the reaction L-glutamate + H(+) = 4-aminobutanoate + CO2. In terms of biological role, catalyzes the synthesis of the inhibitory neurotransmitter gamma-aminobutyric acid (GABA) with pyridoxal 5'-phosphate as cofactor. This is Glutamate decarboxylase 1 (Gad1) from Rattus norvegicus (Rat).